The chain runs to 144 residues: Large ribosomal subunit protein uL15 (144 aa).

The tract at residues 1–54 (MRLNTLSPAPGRVTSRKRVGRGIGSGLGKTAGRGHKGLKSRSGGTVKPGFEGGQ) is disordered. The span at 21-31 (RGIGSGLGKTA) shows a compositional bias: gly residues.

Belongs to the universal ribosomal protein uL15 family. In terms of assembly, part of the 50S ribosomal subunit.

In terms of biological role, binds to the 23S rRNA. This is Large ribosomal subunit protein uL15 from Teredinibacter turnerae (strain ATCC 39867 / T7901).